Consider the following 487-residue polypeptide: L-tartrate/succinate antiporter (487 aa).

The next 14 helical transmembrane spans lie at 10 to 30, 33 to 53, 54 to 74, 93 to 113, 137 to 157, 189 to 209, 236 to 256, 292 to 312, 313 to 333, 340 to 360, 370 to 390, 393 to 413, 418 to 438, and 462 to 482; these read YLAP…AGLE, TWLY…EPVP, GAVV…WLLF, WAVS…FMFG, TLFL…VTPS, IGSY…AIFL, FLGM…LAYV, LMVG…AAMV, GYSV…DIVS, VFFW…TGFI, SLSG…FYLL, FFAS…AAAL, IPLP…SILT, and LGAI…LLWM.

This sequence belongs to the SLC13A/DASS transporter (TC 2.A.47) family. DIT1 subfamily.

The protein localises to the cell inner membrane. It carries out the reaction (2R,3R)-tartrate(out) + succinate(in) = (2R,3R)-tartrate(in) + succinate(out). Functionally, catalyzes the uptake of tartrate in exchange for intracellular succinate. Essential for anaerobic L-tartrate fermentation. The chain is L-tartrate/succinate antiporter (ttdT) from Escherichia coli O6:H1 (strain CFT073 / ATCC 700928 / UPEC).